Here is a 243-residue protein sequence, read N- to C-terminus: Probable transcriptional regulatory protein BRE_29 (243 aa).

The protein belongs to the TACO1 family.

Its subcellular location is the cytoplasm. The sequence is that of Probable transcriptional regulatory protein BRE_29 from Borrelia recurrentis (strain A1).